The sequence spans 395 residues: Innexin inx3 (395 aa).

Residues 1–37 are Cytoplasmic-facing; the sequence is MAVFGMVSAVSGFIKIRYLLDKAVIDNMVFRCHYRIT. The chain crosses the membrane as a helical span at residues 38-58; sequence TAILFTCCIIVTANNLIGDPI. Residues 59–114 lie on the Extracellular side of the membrane; it reads SCINDGAIPMHVINTFCWITYTYTIPGQQHRQIGTDVAGPGLGNEYGQEKRYHSYY. A helical transmembrane segment spans residues 115–135; sequence QWVPFVLFFQGLMFYVPHWVW. At 136 to 183 the chain is on the cytoplasmic side; it reads KNMEDGKIRMITDGLRGMVSVPDDYRRDRQDRILKYFVNSLNTHNGYS. The chain crosses the membrane as a helical span at residues 184-204; that stretch reads FAYFFCELLNFINVIVNIFMV. Residues 205 to 272 lie on the Extracellular side of the membrane; that stretch reads DKFLGGAFMS…VLALNILNEK (68 aa). Residues 273 to 293 traverse the membrane as a helical segment; that stretch reads IYIFLWFWFIILATISGVAVL. Topologically, residues 294–395 are cytoplasmic; it reads YSLVVIMMPT…TFGGGKETET (102 aa). Phosphoserine occurs at positions 366 and 377. Y381 is modified (phosphotyrosine).

It belongs to the pannexin family. As to quaternary structure, heterooligomer of Inx2 (via cytoplasmic C-terminal region) and Inx3 (via cytoplasmic C-terminal region). In terms of tissue distribution, in ovary, expressed in nurse cells and follicle cells. Expressed in embryonic epithelial cells. Ubiquitously expressed in stage 5 embryos. Expressed in foregut and hindgut from stage 11-17 and in proventriculus, epidermis and CNS in stage 16 embryos (at protein level). Expressed in anterior and ventral regions in stage 8 embryos. Repeating epidermal pattern emerges at stage 11, refines to one or two cells at each side of the segment borders by stage 13. Expressed in the imaginal wing disk. In pupae, expressed in the CNS and in secondary and tertiary pigment cells of the retina.

The protein localises to the cell membrane. Its subcellular location is the cell junction. The protein resides in the gap junction. It is found in the cytoplasm. It localises to the lateral cell membrane. The protein localises to the apicolateral cell membrane. In terms of biological role, structural components of the gap junctions. Essential for proper epithelial development of the epidermis. In Drosophila melanogaster (Fruit fly), this protein is Innexin inx3 (Inx3).